The sequence spans 185 residues: GTP cyclohydrolase 1 (185 aa).

Residues C75, H78, and C146 each coordinate Zn(2+).

Belongs to the GTP cyclohydrolase I family. Toroid-shaped homodecamer, composed of two pentamers of five dimers.

It catalyses the reaction GTP + H2O = 7,8-dihydroneopterin 3'-triphosphate + formate + H(+). It participates in cofactor biosynthesis; 7,8-dihydroneopterin triphosphate biosynthesis; 7,8-dihydroneopterin triphosphate from GTP: step 1/1. In Alkalilimnicola ehrlichii (strain ATCC BAA-1101 / DSM 17681 / MLHE-1), this protein is GTP cyclohydrolase 1.